Reading from the N-terminus, the 476-residue chain is Doublesex and mab-3 related transcription factor 3 (476 aa).

A DNA-binding region (DM) is located at residues 29–76; the sequence is CARCRNHGVLSWLKGHKRYCRFKDCTCEKCILIIERQRVMAAQVALRR. Disordered regions lie at residues 89–130 and 147–195; these read DSLR…RPAT and GTLP…SKNC. Residues 102–121 are compositionally biased toward low complexity; the sequence is DAAATAATASQSSPASQASQ. Residues 176 to 185 show a composition bias toward basic and acidic residues; it reads FSDKDTDQRS. Residues 255 to 290 form the DMA domain; that stretch reads RPPLEVLKKIFPNQKPTVLELILKGCGGDLVSAVEV. A compositionally biased stretch (polar residues) spans 418-432; that stretch reads NSTSVFRSSPVLSSR. The segment at 418–476 is disordered; that stretch reads NSTSVFRSSPVLSSRTTEDPRISIPDDGCPIVAKQSIYTEDDYDERSDSSDSRILNTSS.

This sequence belongs to the DMRT family.

The protein resides in the nucleus. Probable transcription factor that plays a role in configuring the spinal circuits controlling stride in vertebrates. Involved in neuronal specification within a specific subdivision of spinal cord neurons and in the development of a coordinated locomotor network controlling limb movements. May regulate transcription during sexual development. The chain is Doublesex and mab-3 related transcription factor 3 (Dmrt3) from Rattus norvegicus (Rat).